A 206-amino-acid polypeptide reads, in one-letter code: Ribosomal RNA large subunit methyltransferase E (206 aa).

S-adenosyl-L-methionine contacts are provided by Gly61, Trp63, Asp81, Asp97, and Asp122. The Proton acceptor role is filled by Lys162.

Belongs to the class I-like SAM-binding methyltransferase superfamily. RNA methyltransferase RlmE family.

The protein resides in the cytoplasm. The catalysed reaction is uridine(2552) in 23S rRNA + S-adenosyl-L-methionine = 2'-O-methyluridine(2552) in 23S rRNA + S-adenosyl-L-homocysteine + H(+). Specifically methylates the uridine in position 2552 of 23S rRNA at the 2'-O position of the ribose in the fully assembled 50S ribosomal subunit. This is Ribosomal RNA large subunit methyltransferase E from Neisseria gonorrhoeae (strain ATCC 700825 / FA 1090).